The following is a 267-amino-acid chain: Lectin SfL-2 (267 aa).

Tandem repeats lie at residues 1–67 (GRYT…RRGE), 68–135 (SNNY…QAEG), 136–202 (DTYN…LTGA), and 203–267 (NNYK…GVAN). The 4 X approximate tandem repeats stretch occupies residues 1-267 (GRYTVQNQWG…GPIGFKGVAN (267 aa)).

Monomer.

In terms of biological role, lectin specific for high mannose N-glycans, recognizes the branched moiety of these glycans. Does not recognize other types of N-glycans or monosaccharides. This chain is Lectin SfL-2, found in Solieria filiformis (Red alga).